We begin with the raw amino-acid sequence, 1076 residues long: DNA-directed RNA polymerase subunit beta (1076 aa).

This sequence belongs to the RNA polymerase beta chain family. In plastids the minimal PEP RNA polymerase catalytic core is composed of four subunits: alpha, beta, beta', and beta''. When a (nuclear-encoded) sigma factor is associated with the core the holoenzyme is formed, which can initiate transcription.

It localises to the plastid. It is found in the chloroplast. It carries out the reaction RNA(n) + a ribonucleoside 5'-triphosphate = RNA(n+1) + diphosphate. DNA-dependent RNA polymerase catalyzes the transcription of DNA into RNA using the four ribonucleoside triphosphates as substrates. This is DNA-directed RNA polymerase subunit beta from Agrostis stolonifera (Creeping bentgrass).